Consider the following 180-residue polypeptide: UDP-4-amino-4,6-dideoxy-N-acetyl-beta-L-altrosamine N-acetyltransferase (180 aa).

Residues 13 to 169 (IDFTNLNDGE…IDVLLYYKDK (157 aa)) enclose the N-acetyltransferase domain.

It carries out the reaction UDP-4-amino-4,6-dideoxy-N-acetyl-beta-L-altrosamine + acetyl-CoA = UDP-2,4-diacetamido-2,4,6-trideoxy-beta-L-altrose + CoA + H(+). Functionally, catalyzes the third step in the biosynthesis of pseudaminic acid, a sialic-acid-like sugar that is used to modify flagellin. Mediates N-4 acetylation of UDP-4-amino-4,6-dideoxy-beta-L-AltNAc to form UDP-2,4-diacetamido-2,4,6-trideoxy-beta-L-altropyranose. In Helicobacter pylori (strain ATCC 700392 / 26695) (Campylobacter pylori), this protein is UDP-4-amino-4,6-dideoxy-N-acetyl-beta-L-altrosamine N-acetyltransferase (pseH).